A 498-amino-acid polypeptide reads, in one-letter code: Cytochrome P450 monooxygenase 71 (498 aa).

Residues 7-24 (YVFALLGILATLYFVRWS) traverse the membrane as a helical segment. N-linked (GlcNAc...) asparagine glycosylation is present at Asn-425. Cys-440 contributes to the heme binding site.

This sequence belongs to the cytochrome P450 family. Requires heme as cofactor.

It localises to the membrane. It functions in the pathway secondary metabolite biosynthesis. In terms of biological role, cytochrome P450 monooxygenase that is able to use dehydroabietic acid and testosterone as substrates for oxidation, suggesting that the natural substrate(s) may be structurally related to steroid compounds. In Postia placenta (strain ATCC 44394 / Madison 698-R) (Brown rot fungus), this protein is Cytochrome P450 monooxygenase 71.